Consider the following 220-residue polypeptide: Ribosomal RNA small subunit methyltransferase G (220 aa).

Residues glycine 82, leucine 87, 137-138 (VE), and arginine 152 contribute to the S-adenosyl-L-methionine site.

The protein belongs to the methyltransferase superfamily. RNA methyltransferase RsmG family.

It localises to the cytoplasm. It catalyses the reaction guanosine(527) in 16S rRNA + S-adenosyl-L-methionine = N(7)-methylguanosine(527) in 16S rRNA + S-adenosyl-L-homocysteine. Its function is as follows. Specifically methylates the N7 position of guanine in position 527 of 16S rRNA. The chain is Ribosomal RNA small subunit methyltransferase G from Janthinobacterium sp. (strain Marseille) (Minibacterium massiliensis).